Reading from the N-terminus, the 351-residue chain is MSGRRYSQISQQEGSSSSDDSDSQQKKTKRTVAHRSPNTTLNGMPRVDSRARPNENSGQSKSSNGRVDTDRKMDLLRKRSNLVHQTLLLEKEVRVRRNAINQRDDSFLSGFIKSLLEIDSSVVIYNTENPDNPKTKQVMPSAEPKKHVKLNSSISSIRFTQHEFEAESEKIIHHSLKGDIEYLPSFKFLLEIKVRTIDYALLFITYKIPHFARKELSSFSDSAIQCLDIVALLRAFSLFAHHYSYRCNTWFYLSKHMKKVASANMDAQCFYVQNSFYKITILYEIKFDDLGFVQPNYCISYILKNQNEKIVSITSKLLNQLDKRFSEFVSLFGFREGSLLLLQALFKPHLG.

A disordered region spans residues 1 to 71 (MSGRRYSQIS…SSNGRVDTDR (71 aa)). Residues 7–18 (SQISQQEGSSSS) show a composition bias toward low complexity. Over residues 54 to 66 (NENSGQSKSSNGR) the composition is skewed to polar residues.

This sequence belongs to the CENP-P/CTF19 family. Component of the heterotetrameric kinetochore subcomplex COMA, which consists of fta2, fta7, mal2 and mis17. The COMA subcomplex is part of a larger constitutive centromere-associated network (CCAN) (also known as central kinetochore Sim4 complex in fission yeast), which is composed of at least cnl2, cnp3, cnp20, fta1, fta2, fta3, fta4, fta6, fta7, mal2, mhf1, mhf2, mis6, mis15, mis17, sim4 and wip1.

The protein resides in the nucleus. It localises to the chromosome. The protein localises to the centromere. It is found in the kinetochore. Its function is as follows. Component of the kinetochore, a multiprotein complex that assembles on centromeric DNA and attaches chromosomes to spindle microtubules, mediating chromosome segregation and sister chromatid segregation during meiosis and mitosis. Component of the inner kinetochore COMA complex, which connects centromere-associated proteins and the outer kinetochore. COMA interacts with other inner kinetochore proteins to form the inner kinetochore constitutive centromere-associated network (CCAN), which serves as a structural platform for outer kinetochore assembly. Fta2, fta3 and fta4 associate with the central core (cnt) and inner repeat (inr) region of the centromere. This is Inner kinetochore subunit fta2 (fta2) from Schizosaccharomyces pombe (strain 972 / ATCC 24843) (Fission yeast).